Consider the following 39-residue polypeptide: uncharacterized protein (39 aa).

Positions 1-21 (MHLRSRWWLALLYCKDPVSRS) are cleaved as a signal peptide.

This is an uncharacterized protein from Saccharomyces cerevisiae (strain ATCC 204508 / S288c) (Baker's yeast).